Consider the following 965-residue polypeptide: Forespore membrane adapter protein MUG56 (965 aa).

The interval 70-175 (SFLMHKSTDE…VQNSNSTSTS (106 aa)) is disordered. Over residues 82–101 (DTPSNLDSPSTQNVGSTNNT) the composition is skewed to polar residues. The segment covering 102-114 (RASQSLLRRSSSF) has biased composition (low complexity). A compositionally biased stretch (polar residues) spans 124–158 (THASTDNNPFSESSTLQPQTAERTSQQAVRSAITE). The span at 159–175 (TTNPSVSVQNSNSTSTS) shows a compositional bias: low complexity. PH domains follow at residues 562–737 (PTPV…EVAS) and 800–961 (VIRM…KEIN).

It belongs to the SPO71 family.

It localises to the cytoplasm. The protein resides in the nucleus. It is found in the prospore membrane. In terms of biological role, may recruit a lipid transfer protein to the forespore membrane during sporulation, thereby aiding forespore membrane formation. Required for meiosis. In Schizosaccharomyces pombe (strain 972 / ATCC 24843) (Fission yeast), this protein is Forespore membrane adapter protein MUG56.